Here is a 98-residue protein sequence, read N- to C-terminus: uncharacterized protein (98 aa).

The protein belongs to the IS150/IS1296 orfA family.

This is an uncharacterized protein from Haemophilus influenzae (strain ATCC 51907 / DSM 11121 / KW20 / Rd).